Reading from the N-terminus, the 362-residue chain is E3 ubiquitin-protein ligase TM129 (362 aa).

Residues 1 to 6 (MDSPEV) lie on the Lumenal side of the membrane. Residues 7–27 (TFTLAYLVFAVCFVFTPNEFH) traverse the membrane as a helical segment. Topologically, residues 28 to 56 (AAGLTVQNLLSGWLGSEDAAFVPFHLRRT) are cytoplasmic. Residues 57–77 (AATLLCHSLLPLGYYVGMCLA) traverse the membrane as a helical segment. The Lumenal segment spans residues 78 to 94 (ASEKRLHALSQAPEAWR). Residues 95–115 (LFLLLAVTLPSIACILIYYWS) traverse the membrane as a helical segment. The Cytoplasmic portion of the chain corresponds to 116-362 (RDRWACHPLA…FCILDVCTVR (247 aa)). The segment at 285–350 (CIGCMQTRAS…ASRVPCPTCR (66 aa)) adopts an RING-type; degenerate zinc-finger fold.

It belongs to the TMEM129 family. Integral component of ER-resident dislocation complexes.

It is found in the endoplasmic reticulum membrane. The catalysed reaction is S-ubiquitinyl-[E2 ubiquitin-conjugating enzyme]-L-cysteine + [acceptor protein]-L-lysine = [E2 ubiquitin-conjugating enzyme]-L-cysteine + N(6)-ubiquitinyl-[acceptor protein]-L-lysine.. It participates in protein modification; protein ubiquitination. Functionally, E3 ubiquitin-protein ligase involved in ER-associated protein degradation, preferentially associates with the E2 enzyme UBE2J2. Exploited by viral US11 proteins to mediate HLA class I proteins degradation. In Homo sapiens (Human), this protein is E3 ubiquitin-protein ligase TM129 (TMEM129).